Here is a 365-residue protein sequence, read N- to C-terminus: Centrosomal protein of 41 kDa (365 aa).

Residues 177-274 (EDCPFLLLDV…ISQKFPQGLT (98 aa)) enclose the Rhodanese domain. The tract at residues 327 to 365 (MSTSTPSRLRMDSRNSKVPSSASSARSQSSTSSHSKPWK) is disordered. Over residues 342 to 365 (SKVPSSASSARSQSSTSSHSKPWK) the composition is skewed to low complexity.

Belongs to the CEP41 family.

It is found in the cytoplasm. It localises to the cytoskeleton. The protein localises to the microtubule organizing center. The protein resides in the centrosome. Its subcellular location is the cell projection. It is found in the cilium. It localises to the cilium basal body. Required during ciliogenesis for tubulin glutamylation in cilium. Probably acts by participating in the transport of tubulin polyglutamylases between the basal body and the cilium. The chain is Centrosomal protein of 41 kDa (cep41) from Xenopus tropicalis (Western clawed frog).